The sequence spans 206 residues: Adenine phosphoribosyltransferase (206 aa).

The protein belongs to the purine/pyrimidine phosphoribosyltransferase family. Homodimer.

The protein resides in the cytoplasm. The catalysed reaction is AMP + diphosphate = 5-phospho-alpha-D-ribose 1-diphosphate + adenine. The protein operates within purine metabolism; AMP biosynthesis via salvage pathway; AMP from adenine: step 1/1. In terms of biological role, catalyzes a salvage reaction resulting in the formation of AMP, that is energically less costly than de novo synthesis. The protein is Adenine phosphoribosyltransferase of Burkholderia mallei (strain NCTC 10229).